A 384-amino-acid polypeptide reads, in one-letter code: S-adenosylmethionine synthase (384 aa).

His-16 is an ATP binding site. Asp-18 provides a ligand contact to Mg(2+). Glu-44 lines the K(+) pocket. 2 residues coordinate L-methionine: Glu-57 and Gln-100. Positions 100–110 (QSADIAMGVDE) are flexible loop. Residues 165–167 (DAK), Asp-240, 246–247 (RK), Ala-263, and Lys-267 contribute to the ATP site. L-methionine is bound at residue Asp-240. Lys-271 contributes to the L-methionine binding site.

This sequence belongs to the AdoMet synthase family. As to quaternary structure, homotetramer; dimer of dimers. Requires Mg(2+) as cofactor. The cofactor is K(+).

Its subcellular location is the cytoplasm. It catalyses the reaction L-methionine + ATP + H2O = S-adenosyl-L-methionine + phosphate + diphosphate. The protein operates within amino-acid biosynthesis; S-adenosyl-L-methionine biosynthesis; S-adenosyl-L-methionine from L-methionine: step 1/1. Its function is as follows. Catalyzes the formation of S-adenosylmethionine (AdoMet) from methionine and ATP. The overall synthetic reaction is composed of two sequential steps, AdoMet formation and the subsequent tripolyphosphate hydrolysis which occurs prior to release of AdoMet from the enzyme. This is S-adenosylmethionine synthase from Cellvibrio japonicus (strain Ueda107) (Pseudomonas fluorescens subsp. cellulosa).